A 394-amino-acid polypeptide reads, in one-letter code: Stearoyl-[acyl-carrier-protein] 9-desaturase 1, chloroplastic (394 aa).

Residues 1–37 (MVMAMDRIALFSSSSSVYHHGSSHSHGSKSSRVFTIR) constitute a chloroplast transit peptide. Fe cation-binding residues include Glu135, Glu173, His176, Glu226, Glu259, and His262.

The protein belongs to the fatty acid desaturase type 2 family. As to quaternary structure, homodimer. Fe(2+) serves as cofactor. In terms of tissue distribution, ubiquitously expressed.

It localises to the plastid. Its subcellular location is the chloroplast. The catalysed reaction is octadecanoyl-[ACP] + 2 reduced [2Fe-2S]-[ferredoxin] + O2 + 2 H(+) = (9Z)-octadecenoyl-[ACP] + 2 oxidized [2Fe-2S]-[ferredoxin] + 2 H2O. The protein operates within lipid metabolism; fatty acid metabolism. Its function is as follows. Converts stearoyl-ACP to oleoyl-ACP by introduction of a cis double bond between carbons 9 and 10 of the acyl chain. The polypeptide is Stearoyl-[acyl-carrier-protein] 9-desaturase 1, chloroplastic (S-ACP-DES1) (Arabidopsis thaliana (Mouse-ear cress)).